Consider the following 152-residue polypeptide: Small ribosomal subunit protein uS13 (152 aa).

This sequence belongs to the universal ribosomal protein uS13 family. Component of the small ribosomal subunit.

The protein resides in the cytoplasm. In terms of biological role, component of the small ribosomal subunit. The ribosome is a large ribonucleoprotein complex responsible for the synthesis of proteins in the cell. Plays an essential role in early embryonic development. The chain is Small ribosomal subunit protein uS13 (rps18) from Danio rerio (Zebrafish).